We begin with the raw amino-acid sequence, 388 residues long: Putative pyridoxal phosphate-dependent aminotransferase EpsN (388 aa).

Position 190 is an N6-(pyridoxal phosphate)lysine (K190).

It belongs to the DegT/DnrJ/EryC1 family. Requires pyridoxal 5'-phosphate as cofactor.

May be involved in the production of the exopolysaccharide (EPS) component of the extracellular matrix during biofilm formation. EPS is responsible for the adhesion of chains of cells into bundles. The protein is Putative pyridoxal phosphate-dependent aminotransferase EpsN (epsN) of Bacillus subtilis (strain 168).